We begin with the raw amino-acid sequence, 224 residues long: Heme response regulator HssR (224 aa).

The region spanning 3 to 116 is the Response regulatory domain; sequence TCLIVDDDPK…ELMFRIKAVL (114 aa). Asp-52 is modified (4-aspartylphosphate). The ompR/PhoB-type DNA-binding region spans 124–222; that stretch reads NNEVSIGNLT…VRGLGYKVDD (99 aa).

In terms of processing, phosphorylated by HssS.

The protein resides in the cytoplasm. Member of the two-component regulatory system HssS/HssR involved in intracellular heme homeostasis and tempering of staphylococcal virulence. Phosphorylated HssR binds to a direct repeat sequence within hrtAB promoter and activates the expression of hrtAB, an efflux pump, in response to extracellular heme, hemin, hemoglobin or blood. The protein is Heme response regulator HssR (hssR) of Staphylococcus saprophyticus subsp. saprophyticus (strain ATCC 15305 / DSM 20229 / NCIMB 8711 / NCTC 7292 / S-41).